A 429-amino-acid chain; its full sequence is Alpha-L-rhamnosidase rgxB (429 aa).

A signal peptide spans 1–20 (MAPIALKILLFTSLIVPSIS). Residues Asn67, Asn77, Asn97, Asn103, Asn112, Asn135, and Asn219 are each glycosylated (N-linked (GlcNAc...) asparagine). The stretch at 217-238 (SKNITLTNWEVVNGDDSISTKA) is one PbH1 1 repeat. Asp231 functions as the Proton donor in the catalytic mechanism. 4 N-linked (GlcNAc...) asparagine glycosylation sites follow: Asn239, Asn247, Asn278, and Asn344. PbH1 repeat units follow at residues 240–260 (STDITIANCTFTSGLGIAIGS) and 271–292 (VERLKISNITYEKTTHAVYFKT). A disulfide bond links Cys374 and Cys380. N-linked (GlcNAc...) asparagine glycans are attached at residues Asn387, Asn395, and Asn414.

It belongs to the glycosyl hydrolase 28 family.

It is found in the secreted. The enzyme catalyses Hydrolysis of terminal non-reducing alpha-L-rhamnose residues in alpha-L-rhamnosides.. In terms of biological role, alpha-L-rhamnosidase which is able to degrade p-nitrophenyl-alpha-L-rhamnopyranoside (pnp_Rha). The natural substrate of this enzyme has not been identified yet. The chain is Alpha-L-rhamnosidase rgxB (rgxB) from Aspergillus niger (strain ATCC MYA-4892 / CBS 513.88 / FGSC A1513).